A 132-amino-acid chain; its full sequence is uncharacterized protein (132 aa).

Disordered regions lie at residues 36-69 (GLASTPSLRPRPRPWEGQLQHQSHQGSLDKPNIS) and 97-132 (QINDSDNDNDDNNNDNNKGDGNDDDNNTVTANPTAR). S101 carries the post-translational modification Phosphoserine.

Copurifies with proteins HOL1, MMP1, PEX7 and PLB1.

This is an uncharacterized protein from Saccharomyces cerevisiae (strain ATCC 204508 / S288c) (Baker's yeast).